The sequence spans 185 residues: Potassium-transporting ATPase KdpC subunit (185 aa).

The chain crosses the membrane as a helical span at residues 14–34 (ALSLLTGVAYPLALTGIAAVI). The segment at 105–128 (AQNGAPAPVDAVTASGSGLDPHVS) is disordered.

This sequence belongs to the KdpC family. In terms of assembly, the system is composed of three essential subunits: KdpA, KdpB and KdpC.

Its subcellular location is the cell inner membrane. Its function is as follows. Part of the high-affinity ATP-driven potassium transport (or Kdp) system, which catalyzes the hydrolysis of ATP coupled with the electrogenic transport of potassium into the cytoplasm. This subunit acts as a catalytic chaperone that increases the ATP-binding affinity of the ATP-hydrolyzing subunit KdpB by the formation of a transient KdpB/KdpC/ATP ternary complex. This is Potassium-transporting ATPase KdpC subunit from Cereibacter sphaeroides (strain ATCC 17029 / ATH 2.4.9) (Rhodobacter sphaeroides).